The sequence spans 74 residues: Exodeoxyribonuclease 7 small subunit (74 aa).

This sequence belongs to the XseB family. In terms of assembly, heterooligomer composed of large and small subunits.

It localises to the cytoplasm. The enzyme catalyses Exonucleolytic cleavage in either 5'- to 3'- or 3'- to 5'-direction to yield nucleoside 5'-phosphates.. Its function is as follows. Bidirectionally degrades single-stranded DNA into large acid-insoluble oligonucleotides, which are then degraded further into small acid-soluble oligonucleotides. The protein is Exodeoxyribonuclease 7 small subunit of Actinobacillus pleuropneumoniae serotype 5b (strain L20).